The following is a 1052-amino-acid chain: Protein argonaute 14 (1052 aa).

Residues 1 to 39 (MASRGGDGLVGGGRGPLGGRDGRGRGPAGGRGGGRGGGH) are compositionally biased toward gly residues. Disordered stretches follow at residues 1–127 (MASR…TPAV) and 170–194 (GGRP…APPS). Positions 40 to 49 (PQQQQQQQPG) are enriched in low complexity. Gly residues-rich tracts occupy residues 50 to 59 (YGRGDGGGRG) and 66 to 81 (GVVG…GGRG). The segment covering 97-117 (VRPAMAAAPAASTPGPVAVAA) has biased composition (low complexity). Positions 173 to 183 (PAPPAAPPAPI) are enriched in pro residues. The region spanning 394-510 (SVVEYVKNCL…LPMEVCTIVE (117 aa)) is the PAZ domain. The region spanning 677–1009 (LLIVILPDVN…AAFRARYYDE (333 aa)) is the Piwi domain.

It belongs to the argonaute family. Ago subfamily. As to expression, expressed in seeds.

Probably involved in the RNA silencing pathway. May bind to short RNAs such as microRNAs (miRNAs) or short interfering RNAs (siRNAs), and represses the translation of mRNAs which are complementary to them. The sequence is that of Protein argonaute 14 (AGO14) from Oryza sativa subsp. japonica (Rice).